Here is a 272-residue protein sequence, read N- to C-terminus: ATP phosphoribosyltransferase regulatory subunit (272 aa).

Belongs to the class-II aminoacyl-tRNA synthetase family. HisZ subfamily. Heteromultimer composed of HisG and HisZ subunits.

The protein resides in the cytoplasm. The protein operates within amino-acid biosynthesis; L-histidine biosynthesis; L-histidine from 5-phospho-alpha-D-ribose 1-diphosphate: step 1/9. Functionally, required for the first step of histidine biosynthesis. May allow the feedback regulation of ATP phosphoribosyltransferase activity by histidine. This chain is ATP phosphoribosyltransferase regulatory subunit, found in Staphylococcus aureus (strain Mu3 / ATCC 700698).